The chain runs to 467 residues: Argininosuccinate lyase (467 aa).

The protein belongs to the lyase 1 family. Argininosuccinate lyase subfamily.

It is found in the cytoplasm. The catalysed reaction is 2-(N(omega)-L-arginino)succinate = fumarate + L-arginine. The protein operates within amino-acid biosynthesis; L-arginine biosynthesis; L-arginine from L-ornithine and carbamoyl phosphate: step 3/3. The protein is Argininosuccinate lyase of Nitrosococcus oceani (strain ATCC 19707 / BCRC 17464 / JCM 30415 / NCIMB 11848 / C-107).